Here is a 658-residue protein sequence, read N- to C-terminus: Protein kinase and PP2C-like domain-containing protein (658 aa).

The region spanning 30–314 (FTLLSPIAKG…DNVVLELESI (285 aa)) is the Protein kinase domain. Residues 36–44 (IAKGSESVV) and lysine 57 contribute to the ATP site. The active-site Proton acceptor is the aspartate 149. Residues 392 to 648 (SCGSFATCGR…DNITVIVVFL (257 aa)) form the PPM-type phosphatase domain. 4 residues coordinate Mn(2+): aspartate 428, glycine 429, aspartate 599, and aspartate 639.

In the N-terminal section; belongs to the protein kinase superfamily. Ser/Thr protein kinase family. It in the C-terminal section; belongs to the PP2C family. The cofactor is Mg(2+). Requires Mn(2+) as cofactor.

It catalyses the reaction L-seryl-[protein] + ATP = O-phospho-L-seryl-[protein] + ADP + H(+). It carries out the reaction L-threonyl-[protein] + ATP = O-phospho-L-threonyl-[protein] + ADP + H(+). The enzyme catalyses O-phospho-L-seryl-[protein] + H2O = L-seryl-[protein] + phosphate. The catalysed reaction is O-phospho-L-threonyl-[protein] + H2O = L-threonyl-[protein] + phosphate. In Arabidopsis thaliana (Mouse-ear cress), this protein is Protein kinase and PP2C-like domain-containing protein.